Consider the following 221-residue polypeptide: ATP-dependent dethiobiotin synthetase BioD (221 aa).

Residue 11 to 16 (DVGKTF) coordinates ATP. Thr-15 is a Mg(2+) binding site. The active site involves Lys-35. Thr-39 contributes to the substrate binding site. ATP is bound by residues Asp-44 and 103–106 (EGAG). The Mg(2+) site is built by Asp-44 and Glu-103.

It belongs to the dethiobiotin synthetase family. In terms of assembly, homodimer. Requires Mg(2+) as cofactor.

It is found in the cytoplasm. The enzyme catalyses (7R,8S)-7,8-diammoniononanoate + CO2 + ATP = (4R,5S)-dethiobiotin + ADP + phosphate + 3 H(+). Its pathway is cofactor biosynthesis; biotin biosynthesis; biotin from 7,8-diaminononanoate: step 1/2. In terms of biological role, catalyzes a mechanistically unusual reaction, the ATP-dependent insertion of CO2 between the N7 and N8 nitrogen atoms of 7,8-diaminopelargonic acid (DAPA, also called 7,8-diammoniononanoate) to form a ureido ring. In Leptospira interrogans serogroup Icterohaemorrhagiae serovar copenhageni (strain Fiocruz L1-130), this protein is ATP-dependent dethiobiotin synthetase BioD.